We begin with the raw amino-acid sequence, 1017 residues long: Protein translocase subunit SecA 1 (1017 aa).

ATP-binding positions include Q143, 161–165 (GEGKT), and D661. Residues 978 to 999 (GLNDDDEPLPAQPITTEQKPGR) form a disordered region. Residues C1003, C1005, C1014, and C1015 each contribute to the Zn(2+) site.

The protein belongs to the SecA family. As to quaternary structure, monomer and homodimer. Part of the essential Sec protein translocation apparatus which comprises SecA, SecYEG and auxiliary proteins SecDF. Other proteins may also be involved. Requires Zn(2+) as cofactor.

It is found in the cell inner membrane. The protein resides in the cytoplasm. It carries out the reaction ATP + H2O + cellular proteinSide 1 = ADP + phosphate + cellular proteinSide 2.. Its function is as follows. Part of the Sec protein translocase complex. Interacts with the SecYEG preprotein conducting channel. Has a central role in coupling the hydrolysis of ATP to the transfer of proteins into and across the cell membrane, serving as an ATP-driven molecular motor driving the stepwise translocation of polypeptide chains across the membrane. The chain is Protein translocase subunit SecA 1 from Chlorobium chlorochromatii (strain CaD3).